A 106-amino-acid chain; its full sequence is Replication restart protein PriB (106 aa).

The SSB domain occupies Thr4–Asp103.

This sequence belongs to the PriB family. As to quaternary structure, homodimer. Interacts with PriA and DnaT. Component of the replication restart primosome. Primosome assembly occurs via a 'hand-off' mechanism. PriA binds to replication forks, subsequently PriB then DnaT bind; DnaT then displaces ssDNA to generate the helicase loading substrate.

Involved in the restart of stalled replication forks, which reloads the replicative helicase on sites other than the origin of replication; the PriA-PriB pathway is the major replication restart pathway. During primosome assembly it facilitates complex formation between PriA and DnaT on DNA; stabilizes PriA on DNA. Stimulates the DNA unwinding activity of PriA helicase. This Yersinia pestis protein is Replication restart protein PriB.